The primary structure comprises 178 residues: Large ribosomal subunit protein bL25 (178 aa).

The protein belongs to the bacterial ribosomal protein bL25 family. CTC subfamily. As to quaternary structure, part of the 50S ribosomal subunit; part of the 5S rRNA/L5/L18/L25 subcomplex. Contacts the 5S rRNA. Binds to the 5S rRNA independently of L5 and L18.

This is one of the proteins that binds to the 5S RNA in the ribosome where it forms part of the central protuberance. The protein is Large ribosomal subunit protein bL25 of Helicobacter pylori (strain ATCC 700392 / 26695) (Campylobacter pylori).